We begin with the raw amino-acid sequence, 91 residues long: MSRSLKKGPFVDHHLLAKVEKAVAIKDKKPVKTWSRRSTILPEFIGVTIAVHNGKQHVPVYVTDQMVGHKLGEFALTRTFKGHPADKKAKR.

Belongs to the universal ribosomal protein uS19 family.

Functionally, protein S19 forms a complex with S13 that binds strongly to the 16S ribosomal RNA. The polypeptide is Small ribosomal subunit protein uS19 (Leptothrix cholodnii (strain ATCC 51168 / LMG 8142 / SP-6) (Leptothrix discophora (strain SP-6))).